A 351-amino-acid polypeptide reads, in one-letter code: S-adenosylmethionine:tRNA ribosyltransferase-isomerase (351 aa).

The protein belongs to the QueA family. As to quaternary structure, monomer.

It localises to the cytoplasm. It carries out the reaction 7-aminomethyl-7-carbaguanosine(34) in tRNA + S-adenosyl-L-methionine = epoxyqueuosine(34) in tRNA + adenine + L-methionine + 2 H(+). The protein operates within tRNA modification; tRNA-queuosine biosynthesis. In terms of biological role, transfers and isomerizes the ribose moiety from AdoMet to the 7-aminomethyl group of 7-deazaguanine (preQ1-tRNA) to give epoxyqueuosine (oQ-tRNA). This is S-adenosylmethionine:tRNA ribosyltransferase-isomerase from Roseobacter denitrificans (strain ATCC 33942 / OCh 114) (Erythrobacter sp. (strain OCh 114)).